The primary structure comprises 213 residues: Guanylate kinase (213 aa).

One can recognise a Guanylate kinase-like domain in the interval 6–186 (GLLIILSSPS…TEERLKTIVS (181 aa)). 13-20 (SPSGAGKS) contributes to the ATP binding site.

It belongs to the guanylate kinase family.

The protein localises to the cytoplasm. It carries out the reaction GMP + ATP = GDP + ADP. Essential for recycling GMP and indirectly, cGMP. This chain is Guanylate kinase, found in Ruegeria pomeroyi (strain ATCC 700808 / DSM 15171 / DSS-3) (Silicibacter pomeroyi).